The following is a 451-amino-acid chain: Glycylpeptide N-tetradecanoyltransferase (451 aa).

Tetradecanoyl-CoA-binding positions include 34–37 (YKFW), 167–169 (LCV), and 175–179 (SKRLT). Catalysis depends on Leu451, which acts as the Proton acceptor; via carboxylate.

This sequence belongs to the NMT family. As to quaternary structure, monomer.

Its subcellular location is the cytoplasm. It catalyses the reaction N-terminal glycyl-[protein] + tetradecanoyl-CoA = N-tetradecanoylglycyl-[protein] + CoA + H(+). Its function is as follows. Adds a myristoyl group to the N-terminal glycine residue of certain cellular proteins. This chain is Glycylpeptide N-tetradecanoyltransferase (NMT1), found in Candida glabrata (strain ATCC 2001 / BCRC 20586 / JCM 3761 / NBRC 0622 / NRRL Y-65 / CBS 138) (Yeast).